A 138-amino-acid chain; its full sequence is Cell division protein SepF (138 aa).

It belongs to the SepF family. Homodimer. Interacts with FtsZ.

The protein localises to the cytoplasm. Cell division protein that is part of the divisome complex and is recruited early to the Z-ring. Probably stimulates Z-ring formation, perhaps through the cross-linking of FtsZ protofilaments. Its function overlaps with FtsA. The sequence is that of Cell division protein SepF from Limosilactobacillus reuteri (strain DSM 20016) (Lactobacillus reuteri).